A 202-amino-acid chain; its full sequence is Probable pathogenesis-related protein CaO19.2336 (202 aa).

The first 20 residues, 1–20, serve as a signal peptide directing secretion; the sequence is MKTLLFIYLQLLLLLSIIIG. N-linked (GlcNAc...) asparagine glycosylation is found at Asn58 and Asn152. One can recognise an SCP domain in the interval 66-179; sequence LKEHNNKRKL…LNALYIVCSY (114 aa).

This sequence belongs to the CRISP family.

The protein localises to the secreted. In terms of biological role, secreted protein that acts as a virulence factor during infections. In Candida albicans (strain SC5314 / ATCC MYA-2876) (Yeast), this protein is Probable pathogenesis-related protein CaO19.2336.